A 1742-amino-acid polypeptide reads, in one-letter code: Meiosis regulator and mRNA stability factor 1 (1742 aa).

Serine 65 is subject to Phosphoserine. The region spanning 351-488 (IGVFWDIENC…ALLHHANELI (138 aa)) is the NYN domain. 2 disordered regions span residues 620-642 (PSSA…TRNA) and 655-721 (SKTG…KEKE). Polar residues predominate over residues 631–642 (SQANSGSATRNA). Low complexity predominate over residues 673-689 (APPHRSSSAAAPAPKAP). Tyrosine 696 carries the phosphotyrosine modification. The residue at position 757 (serine 757) is a Phosphoserine. The RRM domain maps to 788–867 (VDVQISNLDY…KKILVSLATG (80 aa)). 2 HTH OST-type domains span residues 872–946 (SLSL…SPLG) and 1000–1077 (SLKT…HNKP). Serine 1089 and serine 1091 each carry phosphoserine. HTH OST-type domains follow at residues 1097-1171 (QLIQ…LTHR), 1173-1247 (QVKR…CIPR), 1257-1332 (RTKQ…TEVE), 1333-1408 (RFKA…INRK), 1409-1484 (SLRA…CVKL), and 1486-1560 (SLYL…LKND). Residue serine 1571 is modified to Phosphoserine. A disordered region spans residues 1678-1729 (IRNENLPPDPSSPGVSAAVPAPPSPSSETPESLLSKDPTESPAKKQPKNRVK). A compositionally biased stretch (low complexity) spans 1703 to 1712 (SSETPESLLS).

Interacts with LIMK2.

The protein resides in the peroxisome. Essential regulator of oogenesis required for female meiotic progression to repress transposable elements and preventing their mobilization, which is essential for the germline integrity. Probably acts via some RNA metabolic process, equivalent to the piRNA system in males, which mediates the repression of transposable elements during meiosis by forming complexes composed of RNAs and governs the methylation and subsequent repression of transposons. Also required to protect from DNA double-strand breaks. This chain is Meiosis regulator and mRNA stability factor 1, found in Bos taurus (Bovine).